Reading from the N-terminus, the 338-residue chain is Tryptophan--tRNA ligase (338 aa).

ATP contacts are provided by residues Gln11 to Ser13 and Gly19 to Asn20. Residues Pro12–Asn20 carry the 'HIGH' region motif. Asp135 is an L-tryptophan binding site. ATP is bound by residues Gly147–Asp149, Val189, and Lys198–Ser202. The short motif at Lys198–Ser202 is the 'KMSKS' region element.

This sequence belongs to the class-I aminoacyl-tRNA synthetase family. Homodimer.

The protein localises to the cytoplasm. It carries out the reaction tRNA(Trp) + L-tryptophan + ATP = L-tryptophyl-tRNA(Trp) + AMP + diphosphate + H(+). Catalyzes the attachment of tryptophan to tRNA(Trp). This chain is Tryptophan--tRNA ligase, found in Aliivibrio fischeri (strain ATCC 700601 / ES114) (Vibrio fischeri).